The primary structure comprises 165 residues: Protein-export protein SecB (165 aa).

The protein belongs to the SecB family. Homotetramer, a dimer of dimers. One homotetramer interacts with 1 SecA dimer.

Its subcellular location is the cytoplasm. Its function is as follows. One of the proteins required for the normal export of preproteins out of the cell cytoplasm. It is a molecular chaperone that binds to a subset of precursor proteins, maintaining them in a translocation-competent state. It also specifically binds to its receptor SecA. This chain is Protein-export protein SecB, found in Marinobacter nauticus (strain ATCC 700491 / DSM 11845 / VT8) (Marinobacter aquaeolei).